The primary structure comprises 501 residues: Cytochrome P450 76M5 (501 aa).

A helical membrane pass occupies residues 5–25 (ELWVLAAALAVSLLYYLAALM). A heme-binding site is contributed by cysteine 443.

It belongs to the cytochrome P450 family. Requires heme as cofactor.

It is found in the membrane. It catalyses the reaction ent-sandaracopimaradien-3beta-ol + reduced [NADPH--hemoprotein reductase] + O2 = oryzalexin E + oxidized [NADPH--hemoprotein reductase] + H2O + H(+). Functionally, enzyme of the diterpenoid metabolism involved in the biosynthesis of the oryzalexin class of phytoalexins. Hydroxylates ent-sandaracopimaradien. The polypeptide is Cytochrome P450 76M5 (Oryza sativa subsp. japonica (Rice)).